Consider the following 140-residue polypeptide: uncharacterized protein (140 aa).

This is an uncharacterized protein from Acanthamoeba polyphaga mimivirus (APMV).